A 120-amino-acid polypeptide reads, in one-letter code: ESAT-6-like protein EsxQ (120 aa).

This sequence belongs to the WXG100 family. ESAT-6 subfamily.

It localises to the secreted. This Mycobacterium bovis (strain ATCC BAA-935 / AF2122/97) protein is ESAT-6-like protein EsxQ.